A 67-amino-acid polypeptide reads, in one-letter code: Neurotoxin Cex9 (67 aa).

The LCN-type CS-alpha/beta domain occupies 1–65 (KDGYPVEVTG…TWPLPNKSCG (65 aa)). 4 disulfides stabilise this stretch: C11–C64, C15–C40, C24–C45, and C28–C47. C64 bears the Cysteine amide mark. Residues 65–67 (GKK) constitute a propeptide that is removed on maturation.

This sequence belongs to the long (4 C-C) scorpion toxin superfamily. Sodium channel inhibitor family. Beta subfamily. In terms of tissue distribution, expressed by the venom gland.

The protein localises to the secreted. Functionally, beta toxins bind voltage-independently at site-4 of sodium channels (Nav) and shift the voltage of activation toward more negative potentials thereby affecting sodium channel activation and promoting spontaneous and repetitive firing. The polypeptide is Neurotoxin Cex9 (Centruroides exilicauda (Bark scorpion)).